The chain runs to 188 residues: dCTP deaminase (188 aa).

Residues 111-116, 135-137, Q156, Y170, K179, and Q180 contribute to the dCTP site; these read KSTYAR and TLE. The Proton donor/acceptor role is filled by E137.

It belongs to the dCTP deaminase family. Homotrimer.

The catalysed reaction is dCTP + H2O + H(+) = dUTP + NH4(+). It participates in pyrimidine metabolism; dUMP biosynthesis; dUMP from dCTP (dUTP route): step 1/2. Catalyzes the deamination of dCTP to dUTP. In Rickettsia typhi (strain ATCC VR-144 / Wilmington), this protein is dCTP deaminase.